The primary structure comprises 308 residues: Serine/threonine-protein phosphatase 4 catalytic subunit (308 aa).

Mn(2+)-binding residues include D51, H53, D79, and N111. The active-site Proton donor is H112. 2 residues coordinate Mn(2+): H161 and H235.

Belongs to the PPP phosphatase family. PP-4 (PP-X) subfamily. In terms of assembly, catalytic subunit of the histone H2A phosphatase complex (HTP-C) containing PPH3, PSY2 and PSY4. Inactivated in a complex with phosphatase methylesterase PPE1 (PP2Ai). Interacts with phosphatase 2A activator RRD1, which can reactivate PP2Ai by dissociating the catalytic subunit from the complex. Interacts with SPT5 and TAP42. The cofactor is Mn(2+). Post-translationally, reversibly methyl esterified on Leu-308 by leucine carboxyl methyltransferase 1 (PPM1) and protein phosphatase methylesterase 1 (PPE1). Carboxyl methylation influences the affinity of the catalytic subunit for the different regulatory subunits, thereby modulating the PP2A holoenzyme's substrate specificity, enzyme activity and cellular localization.

The protein resides in the cytoplasm. It localises to the nucleus. It catalyses the reaction O-phospho-L-seryl-[protein] + H2O = L-seryl-[protein] + phosphate. The catalysed reaction is O-phospho-L-threonyl-[protein] + H2O = L-threonyl-[protein] + phosphate. Its function is as follows. Forms the histone H2A phosphatase complex in association with the regulatory subunits PSY2 and PSY4, which dephosphorylates H2AS128ph (gamma-H2A) that has been displaced from sites of DNA lesions in the double-stranded DNA break repair process. Dephosphorylation is necessary for efficient recovery from the DNA damage checkpoint. PPH3 is directly involved in the dephosphorylation and activation of the transcription factor GLN3 in response to nutrient availability. The protein is Serine/threonine-protein phosphatase 4 catalytic subunit (PPH3) of Saccharomyces cerevisiae (strain ATCC 204508 / S288c) (Baker's yeast).